The chain runs to 494 residues: Probable cytosol aminopeptidase (494 aa).

Positions 260 and 265 each coordinate Mn(2+). Lys-272 is a catalytic residue. Residues Asp-283, Asp-342, and Glu-344 each contribute to the Mn(2+) site. Arg-346 is an active-site residue.

Belongs to the peptidase M17 family. Mn(2+) serves as cofactor.

It is found in the cytoplasm. The catalysed reaction is Release of an N-terminal amino acid, Xaa-|-Yaa-, in which Xaa is preferably Leu, but may be other amino acids including Pro although not Arg or Lys, and Yaa may be Pro. Amino acid amides and methyl esters are also readily hydrolyzed, but rates on arylamides are exceedingly low.. It catalyses the reaction Release of an N-terminal amino acid, preferentially leucine, but not glutamic or aspartic acids.. In terms of biological role, presumably involved in the processing and regular turnover of intracellular proteins. Catalyzes the removal of unsubstituted N-terminal amino acids from various peptides. This chain is Probable cytosol aminopeptidase, found in Bacillus anthracis (strain CDC 684 / NRRL 3495).